The following is a 580-amino-acid chain: Serine/threonine-protein kinase PINK1, mitochondrial (580 aa).

Residues 1–77 (MAVRQALGRG…RFFRQSVAGL (77 aa)) constitute a mitochondrion transit peptide. Topologically, residues 78–93 (AARIQRQFMVRARGGA) are mitochondrial intermembrane. Residues 94–110 (GPCGRAVFLAFGLGLGL) form a helical membrane-spanning segment. Residues 111 to 117 (IEEKQAE) are required for outer membrane localization. Topologically, residues 111-580 (IEEKQAEGRR…LLLSSWRAAP (470 aa)) are cytoplasmic. The 355-residue stretch at 156 to 510 (YLIGQAIGKG…LAANVLHLSL (355 aa)) folds into the Protein kinase domain. ATP-binding positions include 162–170 (IGKGCNAAV) and lysine 186. Phosphoserine; by autocatalysis is present on serine 227. The active-site Proton acceptor is aspartate 361. Serine 401 is modified (phosphoserine; by autocatalysis).

Belongs to the protein kinase superfamily. Ser/Thr protein kinase family. As to quaternary structure, upon mitochondrial depolarization, it forms a supercomplex with TOM and TIM23 complexes. PINK1-TOM-TIM23 supercomplex formation requires PINK1 interaction with TOMM20 and TOMM70 and is critical for PINK1 stabilization at the outer mitochondrial membrane, kinase activation and downstream mitophagy. Upon mitochondrial depolarization, interacts with TIMM23; the interaction is required for PINK1 accumulation at the outer mitochondrial membrane, kinase activation by autophosphorylation and PRKN recruitement to mitochondria. Interacts with PRKN. Interacts with FBXO7. Forms a complex with PRKN and PARK7. Interacts with NENF. It depends on Mg(2+) as a cofactor. Post-translationally, proteolytically cleaved. In healthy cells, the precursor is continuously imported into the inner mitochondrial membrane (IMM), where it is proteolytically cleaved by mitochondrial-processing peptidase (MPP) and then undergoes further proteolytic cleavage by PARL or AFG3L2 to give rise to the 52 kDa short form. The 52 kDa short form is then released into the cytosol where it rapidly undergoes proteasome-dependent degradation. In unhealthy cells, when cellular stress conditions lead to the loss of mitochondrial membrane potential, mitochondrial import is impaired leading to the precursor accumulating on the outer mitochondrial membrane (OMM). If accumulation at the OMM fails and it is imported into the depolarized mitochondria, it undergoes cleavage by the IMM protease OMA1, promoting its subsequent degradation by the proteasome. In terms of processing, autophosphorylated. Loss of mitochondrial membrane potential results in the precursor accumulating on the outer mitochondrial membrane (OMM) where it is activated by autophosphorylation. Autophosphorylation at Ser-227 and Ser-401 is essential for selective recruitment of PRKN to depolarized mitochondria, via PINK1-dependent phosphorylation of ubiquitin and PRKN. As to expression, high levels expressed in testis, lower levels in brain, heart, lung, liver and kidney.

It is found in the mitochondrion outer membrane. The protein resides in the mitochondrion inner membrane. Its subcellular location is the cytoplasm. It localises to the cytosol. It catalyses the reaction L-seryl-[protein] + ATP = O-phospho-L-seryl-[protein] + ADP + H(+). The catalysed reaction is L-threonyl-[protein] + ATP = O-phospho-L-threonyl-[protein] + ADP + H(+). Its function is as follows. Serine/threonine-protein kinase which acts as a sensor of mitochondrial damage and protects against mitochondrial dysfunction during cellular stress. It phosphorylates mitochondrial proteins to coordinate mitochondrial quality control mechanisms that remove and replace dysfunctional mitochondrial components. Depending on the severity of mitochondrial damage, activity ranges from preventing apoptosis and stimulating mitochondrial biogenesis to eliminating severely damaged mitochondria via PINK1-PRKN-dependent mitophagy. When cellular stress results in irreversible mitochondrial damage, PINK1 accumulates at the outer mitochondrial membrane (OMM) where it phosphorylates pre-existing polyubiquitin chains at 'Ser-65', recruits PRKN from the cytosol to the OMM and activates PRKN by phosphorylation at 'Ser-65'. Activated PRKN then ubiquinates VDAC1 and other OMM proteins to initiate mitophagy. The PINK1-PRKN pathway also promotes fission of damaged mitochondria by phosphorylating and thus promoting the PRKN-dependent degradation of mitochondrial proteins involved in fission such as MFN2. This prevents the refusion of unhealthy mitochondria with the mitochondrial network or initiates mitochondrial fragmentation facilitating their later engulfment by autophagosomes. Also promotes mitochondrial fission independently of PRKN and ATG7-mediated mitophagy, via the phosphorylation and activation of DNM1L. Regulates motility of damaged mitochondria by promoting the ubiquitination and subsequent degradation of MIRO1 and MIRO2; in motor neurons, this likely inhibits mitochondrial intracellular anterograde transport along the axons which probably increases the chance of the mitochondria undergoing mitophagy in the soma. Required for ubiquinone reduction by mitochondrial complex I by mediating phosphorylation of complex I subunit NDUFA10. Phosphorylates LETM1, positively regulating its mitochondrial calcium transport activity. The chain is Serine/threonine-protein kinase PINK1, mitochondrial (Pink1) from Mus musculus (Mouse).